Reading from the N-terminus, the 357-residue chain is EGF-like domain-containing protein 2 (357 aa).

Positions 1–20 are cleaved as a signal peptide; that stretch reads MPPSLSHLFLLSTFASLALC. 2 EGF-like domains span residues 21–55 and 61–93; these read SFYC…FNCG and ISAA…PTCQ. Intrachain disulfides connect Cys24/Cys37, Cys31/Cys43, Cys45/Cys54, Cys65/Cys75, Cys69/Cys81, and Cys83/Cys92.

In terms of tissue distribution, prismatic layer of shell (at protein level). Expressed primarily in the mantle with highest level in the mantle edge and lower level in the mantle pallium.

The protein localises to the secreted. This Pinctada maxima (Silver-lipped pearl oyster) protein is EGF-like domain-containing protein 2.